Consider the following 189-residue polypeptide: UPF0301 protein CTA_0231 (189 aa).

This sequence belongs to the UPF0301 (AlgH) family.

The chain is UPF0301 protein CTA_0231 from Chlamydia trachomatis serovar A (strain ATCC VR-571B / DSM 19440 / HAR-13).